Consider the following 303-residue polypeptide: MASLKDLRDRIASVKATQKITKAMQMVAAARLHRVQEAAQSARPYAQRMAAILANVATDVDTIDVPPLMRGTGRNDVHLLVVCTAERGLCGAFNMQIARRARQQIKALLSAGKIVKILTVGKKGADILSRDYKALMIDHIDLRSVKRVGFAEAAIISQKIIDLFDKDTFDVCTLFYSEFVSVINQRPVAFGLIPMGSPKGAVEAEDVTQKVDENKNLQSIVYDYEPDVASLLEELVPRNLSVQIFQALLENVAGEMGAKVTAMDNASRNAGEMINKLTVAYNRQRQAQITTELIEIIAGAEAL.

It belongs to the ATPase gamma chain family. As to quaternary structure, F-type ATPases have 2 components, CF(1) - the catalytic core - and CF(0) - the membrane proton channel. CF(1) has five subunits: alpha(3), beta(3), gamma(1), delta(1), epsilon(1). CF(0) has three main subunits: a, b and c.

The protein localises to the cell inner membrane. Produces ATP from ADP in the presence of a proton gradient across the membrane. The gamma chain is believed to be important in regulating ATPase activity and the flow of protons through the CF(0) complex. The sequence is that of ATP synthase gamma chain from Bartonella quintana (strain Toulouse) (Rochalimaea quintana).